The chain runs to 99 residues: MLIMNLQLFAHKKGVGSSKNGRDSESKRLGVKSADGQFVLAGNILVRQRGTKIHPGENVGKGKDDTLFAKVDGVVKFERLGRDKKRASVYPVDVEAIAE.

Residues 1–9 (MLIMNLQLF) constitute a propeptide that is removed on maturation.

The protein belongs to the bacterial ribosomal protein bL27 family. In terms of processing, the N-terminus is cleaved by ribosomal processing cysteine protease Prp.

The protein is Large ribosomal subunit protein bL27 of Clostridium beijerinckii (strain ATCC 51743 / NCIMB 8052) (Clostridium acetobutylicum).